We begin with the raw amino-acid sequence, 285 residues long: ATP phosphoribosyltransferase (285 aa).

Belongs to the ATP phosphoribosyltransferase family. Long subfamily. The cofactor is Mg(2+).

The protein localises to the cytoplasm. It carries out the reaction 1-(5-phospho-beta-D-ribosyl)-ATP + diphosphate = 5-phospho-alpha-D-ribose 1-diphosphate + ATP. It functions in the pathway amino-acid biosynthesis; L-histidine biosynthesis; L-histidine from 5-phospho-alpha-D-ribose 1-diphosphate: step 1/9. Feedback inhibited by histidine. In terms of biological role, catalyzes the condensation of ATP and 5-phosphoribose 1-diphosphate to form N'-(5'-phosphoribosyl)-ATP (PR-ATP). Has a crucial role in the pathway because the rate of histidine biosynthesis seems to be controlled primarily by regulation of HisG enzymatic activity. The chain is ATP phosphoribosyltransferase from Streptomyces avermitilis (strain ATCC 31267 / DSM 46492 / JCM 5070 / NBRC 14893 / NCIMB 12804 / NRRL 8165 / MA-4680).